We begin with the raw amino-acid sequence, 392 residues long: Carbamoyl phosphate synthase small chain (392 aa).

A CPSase region spans residues Met1–Asp174. The L-glutamine site is built by Ser47, Gly224, and Gly226. One can recognise a Glutamine amidotransferase type-1 domain in the interval Ser176–Arg392. Residue Cys252 is the Nucleophile of the active site. L-glutamine is bound by residues Leu253, Gln256, Asn294, Gly296, and Phe297. Catalysis depends on residues His367 and Glu369.

This sequence belongs to the CarA family. As to quaternary structure, composed of two chains; the small (or glutamine) chain promotes the hydrolysis of glutamine to ammonia, which is used by the large (or ammonia) chain to synthesize carbamoyl phosphate. Tetramer of heterodimers (alpha,beta)4.

It carries out the reaction hydrogencarbonate + L-glutamine + 2 ATP + H2O = carbamoyl phosphate + L-glutamate + 2 ADP + phosphate + 2 H(+). The enzyme catalyses L-glutamine + H2O = L-glutamate + NH4(+). It functions in the pathway amino-acid biosynthesis; L-arginine biosynthesis; carbamoyl phosphate from bicarbonate: step 1/1. Its pathway is pyrimidine metabolism; UMP biosynthesis via de novo pathway; (S)-dihydroorotate from bicarbonate: step 1/3. In terms of biological role, small subunit of the glutamine-dependent carbamoyl phosphate synthetase (CPSase). CPSase catalyzes the formation of carbamoyl phosphate from the ammonia moiety of glutamine, carbonate, and phosphate donated by ATP, constituting the first step of 2 biosynthetic pathways, one leading to arginine and/or urea and the other to pyrimidine nucleotides. The small subunit (glutamine amidotransferase) binds and cleaves glutamine to supply the large subunit with the substrate ammonia. The sequence is that of Carbamoyl phosphate synthase small chain from Thermotoga maritima (strain ATCC 43589 / DSM 3109 / JCM 10099 / NBRC 100826 / MSB8).